The following is a 134-amino-acid chain: Small ribosomal subunit protein uS11 (134 aa).

The protein belongs to the universal ribosomal protein uS11 family. Component of the small ribosomal subunit.

Its subcellular location is the cytoplasm. This is Small ribosomal subunit protein uS11 (RPS14) from Encephalitozoon cuniculi (strain GB-M1) (Microsporidian parasite).